The sequence spans 372 residues: 2-aminoethylphosphonate--pyruvate transaminase 2 (372 aa).

N6-(pyridoxal phosphate)lysine is present on Lys192.

The protein belongs to the class-V pyridoxal-phosphate-dependent aminotransferase family. PhnW subfamily. In terms of assembly, homodimer. Pyridoxal 5'-phosphate is required as a cofactor.

It carries out the reaction (2-aminoethyl)phosphonate + pyruvate = phosphonoacetaldehyde + L-alanine. In terms of biological role, involved in phosphonate degradation. This chain is 2-aminoethylphosphonate--pyruvate transaminase 2, found in Polaromonas sp. (strain JS666 / ATCC BAA-500).